A 209-amino-acid chain; its full sequence is Glycine cleavage system H-like protein gcvH4 (209 aa).

The segment covering 35-51 has biased composition (low complexity); that stretch reads NNNNNNNNNNNNNNNNN. Positions 35–56 are disordered; it reads NNNNNNNNNNNNNNNNNRNKKL. Residues 73-159 form the Lipoyl-binding domain; it reads FATIGITNYV…KTTTTTTKIK (87 aa).

This sequence belongs to the GcvH family.

The polypeptide is Glycine cleavage system H-like protein gcvH4 (gcvH4) (Dictyostelium discoideum (Social amoeba)).